A 247-amino-acid polypeptide reads, in one-letter code: Ferredoxin:CoB-CoM heterodisulfide reductase subunit C (247 aa).

Residues T32–R62 enclose the 4Fe-4S ferredoxin-type domain. [4Fe-4S] cluster contacts are provided by C41, C44, C47, C51, C84, C87, C90, and C94. The segment covering R216 to T240 has biased composition (basic and acidic residues). Residues R216–V247 are disordered.

This sequence belongs to the HdrC family. In terms of assembly, the ferredoxin:CoB-CoM heterodisulfide reductase is composed of three subunits; HdrA1, HdrB1 and HdrC1. It depends on [4Fe-4S] cluster as a cofactor.

It is found in the cytoplasm. The enzyme catalyses coenzyme B + coenzyme M + 2 oxidized [2Fe-2S]-[ferredoxin] = coenzyme M-coenzyme B heterodisulfide + 2 reduced [2Fe-2S]-[ferredoxin] + 2 H(+). It participates in cofactor metabolism; coenzyme M-coenzyme B heterodisulfide reduction; coenzyme B and coenzyme M from coenzyme M-coenzyme B heterodisulfide: step 1/1. In terms of biological role, part of a complex that catalyzes the reversible reduction of CoM-S-S-CoB to the thiol-coenzymes H-S-CoM (coenzyme M) and H-S-CoB (coenzyme B). Probably involved in methylotrophic methanogenesis but not in aceticlastic methanogenesis. The chain is Ferredoxin:CoB-CoM heterodisulfide reductase subunit C from Methanosarcina acetivorans (strain ATCC 35395 / DSM 2834 / JCM 12185 / C2A).